Consider the following 569-residue polypeptide: Endonuclease/exonuclease/phosphatase family domain-containing protein 1 (569 aa).

Residues 1-20 (MGSTLGCHRSIPRDPSDLSH) form a disordered region. G2 carries N-myristoyl glycine lipidation. Positions 11–20 (IPRDPSDLSH) are enriched in basic and acidic residues. Phosphoserine occurs at positions 16, 21, and 25. Residues 38–67 (ERLNINTATEEELMTLPGVTRAVARSIVEY) form the HhH domain. Phosphoserine occurs at positions 106, 110, 160, and 173. The tract at residues 200 to 225 (SRPPSTHTNGGLTFTAKPHPSPTSLS) is disordered. Residues 202 to 211 (PPSTHTNGGL) show a composition bias toward polar residues. T265 carries the post-translational modification Phosphothreonine. Position 428 is a phosphoserine (S428). A disordered region spans residues 545–569 (SKKDAPRNGSGVALERSEANIKHER). Positions 559–569 (ERSEANIKHER) are enriched in basic and acidic residues.

In Homo sapiens (Human), this protein is Endonuclease/exonuclease/phosphatase family domain-containing protein 1 (EEPD1).